The sequence spans 392 residues: MKNIFLTSESVTEGHPDKVCDQISDAILDAIIKEDKDARVACETCSTTGLVMVMGEITTTSYVDIRSIVRKTLAEIGYDNADYGIDARTCAIITSLEEQSKDIAQGVDESEEYKDNKSDEYDRYGAGDQGMVFGYATNETESGLPLPLELSHKLARRLATVRKEKILNYLRPDGKTQVTVEYENDAPKRIEAIVVSTQHDPDVDYEQLKEDIKREVILKIVDESMIDENTKFFINPTGKFVIGGPMGDAGLTGRKIIVDTYGGFCNHGGGAFSGKDPTKTDRSAAYFARYIAKNVVAAGLCDKCEVGFSYAIGVAKPISMFINTFGTNKIEEEKIIQAINENFDARPKAIIDKLDLQRPIYREVASYGHFGRNDLDLSWEKCDKAEALKKYL.

Histidine 15 contacts ATP. Residue aspartate 17 participates in Mg(2+) binding. Position 43 (glutamate 43) interacts with K(+). L-methionine contacts are provided by glutamate 56 and glutamine 99. Residues 99–109 (QSKDIAQGVDE) form a flexible loop region. Residues 173–175 (DGK), 239–240 (KF), aspartate 248, 254–255 (RK), alanine 271, and lysine 275 each bind ATP. An L-methionine-binding site is contributed by aspartate 248. Lysine 279 contributes to the L-methionine binding site.

This sequence belongs to the AdoMet synthase family. In terms of assembly, homotetramer; dimer of dimers. It depends on Mg(2+) as a cofactor. Requires K(+) as cofactor.

Its subcellular location is the cytoplasm. It catalyses the reaction L-methionine + ATP + H2O = S-adenosyl-L-methionine + phosphate + diphosphate. It participates in amino-acid biosynthesis; S-adenosyl-L-methionine biosynthesis; S-adenosyl-L-methionine from L-methionine: step 1/1. In terms of biological role, catalyzes the formation of S-adenosylmethionine (AdoMet) from methionine and ATP. The overall synthetic reaction is composed of two sequential steps, AdoMet formation and the subsequent tripolyphosphate hydrolysis which occurs prior to release of AdoMet from the enzyme. The sequence is that of S-adenosylmethionine synthase from Finegoldia magna (strain ATCC 29328 / DSM 20472 / WAL 2508) (Peptostreptococcus magnus).